The primary structure comprises 1076 residues: DNA-directed RNA polymerase subunit beta (1076 aa).

It belongs to the RNA polymerase beta chain family. As to quaternary structure, in plastids the minimal PEP RNA polymerase catalytic core is composed of four subunits: alpha, beta, beta', and beta''. When a (nuclear-encoded) sigma factor is associated with the core the holoenzyme is formed, which can initiate transcription.

It is found in the plastid. The protein resides in the chloroplast. The catalysed reaction is RNA(n) + a ribonucleoside 5'-triphosphate = RNA(n+1) + diphosphate. Functionally, DNA-dependent RNA polymerase catalyzes the transcription of DNA into RNA using the four ribonucleoside triphosphates as substrates. The chain is DNA-directed RNA polymerase subunit beta from Agrostis stolonifera (Creeping bentgrass).